We begin with the raw amino-acid sequence, 390 residues long: Alpha-2B adrenergic receptor (390 aa).

The helical transmembrane segment at 1 to 25 (AIATVITFLILFTIFGNSLVILAVL) threads the bilayer. Residues 26 to 36 (TSRSLRAPQNL) lie on the Cytoplasmic side of the membrane. Residues 37–62 (FLVSLAAADIMVATLIIPFSLANELL) traverse the membrane as a helical segment. Topologically, residues 63–72 (GYWYFRRTWC) are extracellular. Cysteine 72 and cysteine 151 form a disulfide bridge. A helical transmembrane segment spans residues 73–95 (EVYLALDVLFCTSSIVHLCAISL). Residues 96 to 117 (DRYWAVSRALEYNSKRTPRRIK) lie on the Cytoplasmic side of the membrane. Residues 118–140 (CIILTVWLIAAAISLPPLIYKGD) traverse the membrane as a helical segment. At 141-156 (QGPQPRGRPQCKLNQE) the chain is on the extracellular side. Residues 157–180 (AWYILSSSIGSFFAPCLIMILVYL) traverse the membrane as a helical segment. Residues 181-354 (RIYLIAKRSH…LTREKRFTFV (174 aa)) are Cytoplasmic-facing. 2 disordered regions span residues 191 to 218 (RRGP…PSAL) and 233 to 311 (EANG…PLQQ). Residues 280 to 292 (LEEEADKEEEEEC) show a composition bias toward acidic residues. Residues 355–378 (LAVVIGVFVLCWFPFFFSYSLGAI) form a helical membrane-spanning segment. Topologically, residues 379 to 390 (CPQHCKVPHGLF) are extracellular.

Belongs to the G-protein coupled receptor 1 family. Adrenergic receptor subfamily. ADRA2B sub-subfamily. As to quaternary structure, interacts with RAB26. Interacts with PPP1R9B. Interacts with GGA1, GGA2 and GGA3.

The protein localises to the cell membrane. Its function is as follows. Alpha-2 adrenergic receptors mediate the catecholamine-induced inhibition of adenylate cyclase through the action of G proteins. This is Alpha-2B adrenergic receptor (ADRA2B) from Dugong dugon (Dugong).